Consider the following 392-residue polypeptide: Iripin-1 (392 aa).

The N-terminal stretch at 1 to 16 (MKPLVPLLFLLVSCRA) is a signal peptide. 3 N-linked (GlcNAc...) asparagine glycosylation sites follow: Asn104, Asn196, and Asn265.

This sequence belongs to the serpin family. In terms of assembly, interacts with human KLKB1. Interacts with human ST14. Interacts with human PLG (plasmin). Highly expressed in salivary gland. Expressed in midgut and ovary.

Its subcellular location is the secreted. In terms of biological role, serine protease inhibitor that modulates blood feeding of ticks on vertebrate species. Modestly inhibits human trypsin, plasma kallikrein (KLKB1), matriptase (ST14) and plasmin (PLG) via a classic serpin inhibitory mechanism. Modestly reduces enzymatic activity of human alpha-chymotrypsin, coagulation factor Xa (F10), factor XIIa (F12), cathepsin G (CTSG), tPA/tissue-type plasminogen activator (PLAT) and uPA/urokinase-type plasminogen activator (PLAU). Probably acts as a substrate rather than an inhibitor for the human neutrophil elastase (ELANE) and thus reduces its enzymatic activity in in vitro assays. Decreases expression of adhesion molecules VCAM1 and CD99 on the surface of human cells. Increases the production of chemokines for neutrophils and monocytes, such as KC/CXCL1, MIP-2/CXCL2 and MIP-1/CCL2, and anti-inflammatory cytokine IL10 in mouse inflammation models. Reduces the recruitment of mouse neutrophils and monocytes to the site of inflammation. Decreases expression of CXCR2 on the surface of mouse neutrophils. Increases expression of integrin ITGAM/ITGB2 on the surface of mouse neutrophils. In Ixodes ricinus (Common tick), this protein is Iripin-1.